The following is a 117-amino-acid chain: Small ribosomal subunit protein bS6 (117 aa).

A disordered region spans residues 96-117 (HAEGPSVQMQKRDERDNRRERR). The segment covering 105-117 (QKRDERDNRRERR) has biased composition (basic and acidic residues).

It belongs to the bacterial ribosomal protein bS6 family.

In terms of biological role, binds together with bS18 to 16S ribosomal RNA. This Ruegeria sp. (strain TM1040) (Silicibacter sp.) protein is Small ribosomal subunit protein bS6.